The sequence spans 361 residues: Phospho-N-acetylmuramoyl-pentapeptide-transferase (361 aa).

Transmembrane regions (helical) follow at residues 28 to 48, 73 to 93, 97 to 117, 134 to 154, 168 to 188, 200 to 220, 237 to 257, 264 to 284, 289 to 309, and 338 to 358; these read LAALTALSISFLIGPAMIRSL, TMGGTLILTAVIVTTLLWADL, YIWVVSLTTLGFGAIGWVDDY, FFWQSIIALLVAVYLAMTADL, VAIPLGTFLFIVLTYLVIVGT, GLAIMPTVMISGALAIFAYVA, AGELAVFCGALTGAGLAFLWF, VFMGDVGALALGAALGVITVI, IVLVIMGGVFVMEALSVMIQV, and QVVVRFWIITLILVLIGLSTL.

Belongs to the glycosyltransferase 4 family. MraY subfamily. Mg(2+) is required as a cofactor.

The protein localises to the cell inner membrane. It catalyses the reaction UDP-N-acetyl-alpha-D-muramoyl-L-alanyl-gamma-D-glutamyl-meso-2,6-diaminopimeloyl-D-alanyl-D-alanine + di-trans,octa-cis-undecaprenyl phosphate = di-trans,octa-cis-undecaprenyl diphospho-N-acetyl-alpha-D-muramoyl-L-alanyl-D-glutamyl-meso-2,6-diaminopimeloyl-D-alanyl-D-alanine + UMP. It functions in the pathway cell wall biogenesis; peptidoglycan biosynthesis. In terms of biological role, catalyzes the initial step of the lipid cycle reactions in the biosynthesis of the cell wall peptidoglycan: transfers peptidoglycan precursor phospho-MurNAc-pentapeptide from UDP-MurNAc-pentapeptide onto the lipid carrier undecaprenyl phosphate, yielding undecaprenyl-pyrophosphoryl-MurNAc-pentapeptide, known as lipid I. The protein is Phospho-N-acetylmuramoyl-pentapeptide-transferase of Nitrosomonas europaea (strain ATCC 19718 / CIP 103999 / KCTC 2705 / NBRC 14298).